A 227-amino-acid chain; its full sequence is Extracellular deoxyribonuclease (227 aa).

The N-terminal stretch at methionine 1 to alanine 20 is a signal peptide.

Belongs to the EndA/NucM nuclease family.

The protein localises to the secreted. The sequence is that of Extracellular deoxyribonuclease from Aeromonas hydrophila.